A 210-amino-acid chain; its full sequence is Sortase A (210 aa).

Residues 1-5 are Cytoplasmic-facing; sequence MNKQR. A helical membrane pass occupies residues 6 to 26; the sequence is IYSIVAILLFVVGGVLIGKPF. Residues 27-210 lie on the Extracellular side of the membrane; the sequence is YDGYQAEKKQ…GDLVGTKAKK (184 aa). The Proton donor/acceptor role is filled by His126. Catalysis depends on Cys187, which acts as the Acyl-thioester intermediate.

Belongs to the bacterial sortase family. Class A subfamily.

It is found in the cell membrane. With respect to regulation, inhibited by thiol-reactive reagents. Its function is as follows. Transpeptidase that anchors surface proteins to the cell wall. Recognizes and modifies its substrate by proteolytic cleavage of a C-terminal sorting signal. Following cleavage, a covalent intermediate is formed via a thioester bond between the sortase and its substrate, which is then transferred and covalently attached to the cell wall. This sortase recognizes a Leu-Pro-x-Thr-Gly (LPXTG) motif, which is cleaved by the sortase between the threonine and glycine residues. Important for growth in macrophages. May be critical in the early stages of inhalation anthrax. This chain is Sortase A, found in Bacillus anthracis.